Reading from the N-terminus, the 212-residue chain is uncharacterized protein (212 aa).

Positions 53, 74, and 97 each coordinate S-adenosyl-L-methionine.

The protein belongs to the methyltransferase superfamily. YrrT family.

Functionally, could be a S-adenosyl-L-methionine-dependent methyltransferase. This is an uncharacterized protein from Bacillus cytotoxicus (strain DSM 22905 / CIP 110041 / 391-98 / NVH 391-98).